The primary structure comprises 4250 residues: Dynein axonemal heavy chain 1 (4250 aa).

Positions 1–73 (MEECNKEGPS…KSPLTGTDKK (73 aa)) are disordered. Positions 1–1527 (MEECNKEGPS…YIRAVNAEFI (1527 aa)) are stem. The segment covering 24–42 (PESHDLEKILQESNYHPER) has biased composition (basic and acidic residues). Positions 46 to 55 (NPDPKTPPLP) are enriched in pro residues. 4 AAA regions span residues 1528–1749 (YGYE…VISA), 1809–2042 (QAIR…NTVK), 2174–2434 (TMMP…VFQG), and 2532–2784 (DYNQ…LARH). Positions 1566–1573 (GPAGTGKT) match the GPAGTGKT motif motif. Residue 1566–1573 (GPAGTGKT) participates in ATP binding. The short motif at 1616–1622 (CFDEFNR) is the CFDEFNR motif element. ATP contacts are provided by residues 1847–1854 (GPTGSGKS), 2212–2219 (GPTGTGKT), and 2571–2578 (GVGGSGRS). Positions 2799–3097 (FSILIGQKKM…EELEMKCEQC (299 aa)) are stalk. The stretch at 3045–3128 (LREAQDDLEV…QETVENLENM (84 aa)) forms a coiled coil. 2 AAA regions span residues 3182-3412 (LGNP…EIQA) and 3625-3844 (MQDF…QLKM).

This sequence belongs to the dynein heavy chain family. In terms of assembly, consists of at least two heavy chains and a number of intermediate and light chains.

The protein resides in the cytoplasm. It is found in the cytoskeleton. Its subcellular location is the cilium axoneme. The protein localises to the cell projection. It localises to the cilium. The protein resides in the flagellum. In terms of biological role, force generating protein of cilia required for sperm flagellum motility. Produces force towards the minus ends of microtubules. Dynein has ATPase activity; the force-producing power stroke is thought to occur on release of ADP. Required in spermatozoa for the formation of the inner dynein arms and biogenesis of the axoneme. In Mus musculus (Mouse), this protein is Dynein axonemal heavy chain 1.